Consider the following 453-residue polypeptide: Bifunctional protein GlmU (453 aa).

Positions 1 to 225 (MNIVILAAGT…EWETLGVNSK (225 aa)) are pyrophosphorylase. UDP-N-acetyl-alpha-D-glucosamine-binding positions include 6-9 (LAAG), Lys-20, Gln-71, 76-77 (GT), 98-100 (YGD), Gly-135, Glu-150, Asn-165, and Asn-223. Mg(2+) is bound at residue Asp-100. Asn-223 is a Mg(2+) binding site. The interval 226–246 (AQLAELERIHQRNIAEALLVD) is linker. Positions 247 to 453 (GVTLADPARL…GYVRPVKKKS (207 aa)) are N-acetyltransferase. The UDP-N-acetyl-alpha-D-glucosamine site is built by Arg-329 and Lys-347. The active-site Proton acceptor is His-359. The UDP-N-acetyl-alpha-D-glucosamine site is built by Tyr-362 and Asn-373. Residues Ala-376, 382 to 383 (NY), Ser-401, and Ala-419 contribute to the acetyl-CoA site.

It in the N-terminal section; belongs to the N-acetylglucosamine-1-phosphate uridyltransferase family. In the C-terminal section; belongs to the transferase hexapeptide repeat family. In terms of assembly, homotrimer. Requires Mg(2+) as cofactor.

Its subcellular location is the cytoplasm. The catalysed reaction is alpha-D-glucosamine 1-phosphate + acetyl-CoA = N-acetyl-alpha-D-glucosamine 1-phosphate + CoA + H(+). It catalyses the reaction N-acetyl-alpha-D-glucosamine 1-phosphate + UTP + H(+) = UDP-N-acetyl-alpha-D-glucosamine + diphosphate. Its pathway is nucleotide-sugar biosynthesis; UDP-N-acetyl-alpha-D-glucosamine biosynthesis; N-acetyl-alpha-D-glucosamine 1-phosphate from alpha-D-glucosamine 6-phosphate (route II): step 2/2. It functions in the pathway nucleotide-sugar biosynthesis; UDP-N-acetyl-alpha-D-glucosamine biosynthesis; UDP-N-acetyl-alpha-D-glucosamine from N-acetyl-alpha-D-glucosamine 1-phosphate: step 1/1. It participates in bacterial outer membrane biogenesis; LPS lipid A biosynthesis. In terms of biological role, catalyzes the last two sequential reactions in the de novo biosynthetic pathway for UDP-N-acetylglucosamine (UDP-GlcNAc). The C-terminal domain catalyzes the transfer of acetyl group from acetyl coenzyme A to glucosamine-1-phosphate (GlcN-1-P) to produce N-acetylglucosamine-1-phosphate (GlcNAc-1-P), which is converted into UDP-GlcNAc by the transfer of uridine 5-monophosphate (from uridine 5-triphosphate), a reaction catalyzed by the N-terminal domain. The chain is Bifunctional protein GlmU from Burkholderia lata (strain ATCC 17760 / DSM 23089 / LMG 22485 / NCIMB 9086 / R18194 / 383).